We begin with the raw amino-acid sequence, 214 residues long: C-type lectin domain family 4 member E (214 aa).

Over 1 to 22 the chain is Cytoplasmic; that stretch reads MNSTKSPASHHTERGCFKNSQV. A helical; Signal-anchor for type II membrane protein membrane pass occupies residues 23–45; that stretch reads LSWTIAGASILFLSGCFITRCVV. Over 46–214 the chain is Extracellular; it reads TYRSSQISGQ…CEMPEISPLD (169 aa). The cysteines at positions 80 and 91 are disulfide-linked. Residues 87–206 form the C-type lectin domain; sequence YQSSCYFFST…CFYSMPWICE (120 aa). A glycan (N-linked (GlcNAc...) asparagine) is linked at Asn-107. Cystine bridges form between Cys-108-Cys-205 and Cys-179-Cys-197. Val-117, Glu-123, Glu-169, Asn-171, Asn-193, Asp-194, and Glu-206 together coordinate Ca(2+). The Confers specificity for glucose/mannose-type carbohydrates motif lies at 169–171; sequence EPN.

As to quaternary structure, monomer and homodimer. Interacts with signaling adapter Fc receptor gamma chain/FCER1G to form a functional complex; the interaction is direct. Alternatively, acts as a bridge for interaction between CLEC4D and FCER1G. A heterodimer of CLEC4E and CLEC4D associates with FCER1G to form a functional complex. Interacts with SAP130 nuclear protein that is released from necrotic cells; the interaction is direct. As to expression, highly expressed in macrophages in response to stimulation with bacterial glycolipids and pro-inflammatory cytokines. Expressed in dendritic cells (at protein level) in response to stimulation with mycobacterial trehalose 6,6'-dimycolate (TDM).

It localises to the cell membrane. The protein localises to the cell projection. Its subcellular location is the phagocytic cup. Calcium-dependent lectin that acts as a pattern recognition receptor (PRR) of the innate immune system: recognizes damage-associated molecular patterns (DAMPs) of abnormal self and pathogen-associated molecular patterns (PAMPs) of bacteria and fungi. The PAMPs notably include mycobacterial trehalose 6,6'-dimycolate (TDM), a cell wall glycolipid with potent adjuvant immunomodulatory functions. Interacts with signaling adapter Fc receptor gamma chain/FCER1G to form a functional complex in myeloid cells. Binding of mycobacterial trehalose 6,6'-dimycolate (TDM) to this receptor complex leads to phosphorylation of the immunoreceptor tyrosine-based activation motif (ITAM) of FCER1G, triggering activation of SYK, CARD9 and NF-kappa-B, consequently driving maturation of antigen-presenting cells and shaping antigen-specific priming of T-cells toward effector T-helper 1 (Th1) and T-helper 17 (Th17) cell subtypes. Also recognizes alpha-mannose residues on pathogenic fungi of the genus Malassezia and mediates macrophage activation. Through recognition of DAMPs released upon nonhomeostatic cell death, enables immune sensing of damaged self and promotes inflammatory cell infiltration into the damaged tissue. This is C-type lectin domain family 4 member E from Mus musculus (Mouse).